A 156-amino-acid polypeptide reads, in one-letter code: 6,7-dimethyl-8-ribityllumazine synthase (156 aa).

5-amino-6-(D-ribitylamino)uracil contacts are provided by residues phenylalanine 28, 62–64 (ALE), and 86–88 (AVI). (2S)-2-hydroxy-3-oxobutyl phosphate is bound at residue 91–92 (ET). Residue histidine 94 is the Proton donor of the active site. Asparagine 119 contributes to the 5-amino-6-(D-ribitylamino)uracil binding site. Arginine 133 lines the (2S)-2-hydroxy-3-oxobutyl phosphate pocket.

Belongs to the DMRL synthase family.

The catalysed reaction is (2S)-2-hydroxy-3-oxobutyl phosphate + 5-amino-6-(D-ribitylamino)uracil = 6,7-dimethyl-8-(1-D-ribityl)lumazine + phosphate + 2 H2O + H(+). The protein operates within cofactor biosynthesis; riboflavin biosynthesis; riboflavin from 2-hydroxy-3-oxobutyl phosphate and 5-amino-6-(D-ribitylamino)uracil: step 1/2. Functionally, catalyzes the formation of 6,7-dimethyl-8-ribityllumazine by condensation of 5-amino-6-(D-ribitylamino)uracil with 3,4-dihydroxy-2-butanone 4-phosphate. This is the penultimate step in the biosynthesis of riboflavin. This Azoarcus sp. (strain BH72) protein is 6,7-dimethyl-8-ribityllumazine synthase.